A 93-amino-acid chain; its full sequence is Stromal cell-derived factor 1 (93 aa).

A signal peptide spans 1-21; the sequence is MDIRTLALFSILLGSLCLSEG. The Receptor activation motif motif lies at 22–23; sequence KP. The segment at 29 to 33 is receptor and heparin binding; that stretch reads RCPCR. Cystine bridges form between C30–C55 and C32–C71. Residues 41–51, R62, Q69, and K85 contribute to the heparin site; that span reads KSNIKHLKILS. 2 receptor binding regions span residues 48–50 and 60–64; these read KIL and VARLK.

The protein belongs to the intercrine alpha (chemokine CxC) family. As to quaternary structure, monomer or homodimer; in equilibrium. Dimer formation is induced by non acidic pH and the presence of multivalent anions, and by binding to cxcr4 or heparin.

Its subcellular location is the secreted. Functionally, chemoattractant. Activates the C-X-C chemokine receptor cxcr4 to induce a rapid and transient rise in the level of intracellular calcium ions, and chemotaxis. Signaling with cxcr4 mediates the directional movement of mesodermal cells during gastrulation. Binds to the allosteric site (site 2) of integrins and activates them in a cxcr4-independent manner. The sequence is that of Stromal cell-derived factor 1 from Xenopus tropicalis (Western clawed frog).